Here is a 225-residue protein sequence, read N- to C-terminus: UPF0758 protein Sputw3181_0338 (225 aa).

The MPN domain maps to 102–224 (VLTNPDLTRD…IVSFAERGWI (123 aa)). 3 residues coordinate Zn(2+): histidine 173, histidine 175, and aspartate 186. The JAMM motif motif lies at 173–186 (HNHPSGIAEPSQAD).

This sequence belongs to the UPF0758 family.

This Shewanella sp. (strain W3-18-1) protein is UPF0758 protein Sputw3181_0338.